A 114-amino-acid polypeptide reads, in one-letter code: MGPGLLCWELLYLLGAGPVEAGVTQSPTHLIKTRGQQVTLRCSPISGHSSVSWYQQAPGQGPQFIFEYANELRRSEGNFPNRFSGRQFHDYCSEMNVSALELGDSALYLCARSL.

Positions 1–21 are cleaved as a signal peptide; the sequence is MGPGLLCWELLYLLGAGPVEA. An Ig-like domain is found at 22 to 114; the sequence is GVTQSPTHLI…SALYLCARSL (93 aa). C42 and C110 form a disulfide bridge. N96 is a glycosylation site (N-linked (GlcNAc...) asparagine).

Alpha-beta TR is a heterodimer composed of an alpha and beta chain; disulfide-linked. The alpha-beta TR is associated with the transmembrane signaling CD3 coreceptor proteins to form the TR-CD3 (TcR or TCR). The assembly of alpha-beta TR heterodimers with CD3 occurs in the endoplasmic reticulum where a single alpha-beta TR heterodimer associates with one CD3D-CD3E heterodimer, one CD3G-CD3E heterodimer and one CD247 homodimer forming a stable octameric structure. CD3D-CD3E and CD3G-CD3E heterodimers preferentially associate with TR alpha and TR beta chains, respectively. The association of the CD247 homodimer is the last step of TcR assembly in the endoplasmic reticulum and is required for transport to the cell surface.

Its subcellular location is the cell membrane. In terms of biological role, probable non-functional open reading frame (ORF) of V region of the variable domain of T cell receptor (TR) beta chain. Non-functional ORF generally cannot participate in the synthesis of a productive T cell receptor (TR) chain due to altered V-(D)-J or switch recombination and/or splicing site (at mRNA level) and/or conserved amino acid change (protein level). Alpha-beta T cell receptors are antigen specific receptors which are essential to the immune response and are present on the cell surface of T lymphocytes. Recognize peptide-major histocompatibility (MH) (pMH) complexes that are displayed by antigen presenting cells (APC), a prerequisite for efficient T cell adaptive immunity against pathogens. Binding of alpha-beta TR to pMH complex initiates TR-CD3 clustering on the cell surface and intracellular activation of LCK that phosphorylates the ITAM motifs of CD3G, CD3D, CD3E and CD247 enabling the recruitment of ZAP70. In turn ZAP70 phosphorylates LAT, which recruits numerous signaling molecules to form the LAT signalosome. The LAT signalosome propagates signal branching to three major signaling pathways, the calcium, the mitogen-activated protein kinase (MAPK) kinase and the nuclear factor NF-kappa-B (NF-kB) pathways, leading to the mobilization of transcription factors that are critical for gene expression and essential for T cell growth and differentiation. The T cell repertoire is generated in the thymus, by V-(D)-J rearrangement. This repertoire is then shaped by intrathymic selection events to generate a peripheral T cell pool of self-MH restricted, non-autoaggressive T cells. Post-thymic interaction of alpha-beta TR with the pMH complexes shapes TR structural and functional avidity. This chain is Probable non-functional T cell receptor beta variable 5-3, found in Homo sapiens (Human).